Here is a 77-residue protein sequence, read N- to C-terminus: MNKQQNNLQDIFLNSARKNKMPVTIYLSTGFQINGTVKGFDSFTVILDSEGKQMLIYKHAITTVTPEKPILFVDNES.

In terms of domain architecture, Sm spans 10–70; sequence DIFLNSARKN…ITTVTPEKPI (61 aa).

Belongs to the Hfq family. In terms of assembly, homohexamer.

RNA chaperone that binds small regulatory RNA (sRNAs) and mRNAs to facilitate mRNA translational regulation in response to envelope stress, environmental stress and changes in metabolite concentrations. Also binds with high specificity to tRNAs. The protein is RNA-binding protein Hfq of Clostridium botulinum (strain Eklund 17B / Type B).